The sequence spans 123 residues: Small ribosomal subunit protein uS12cz/uS12cy (123 aa).

The protein belongs to the universal ribosomal protein uS12 family. Part of the 30S ribosomal subunit.

Its subcellular location is the plastid. It is found in the chloroplast. Functionally, with S4 and S5 plays an important role in translational accuracy. Located at the interface of the 30S and 50S subunits. The sequence is that of Small ribosomal subunit protein uS12cz/uS12cy (rps12-A) from Coffea arabica (Arabian coffee).